A 590-amino-acid polypeptide reads, in one-letter code: J protein JJJ1 (590 aa).

The 70-residue stretch at 3–72 folds into the J domain; the sequence is TCYYELLGVE…RAWYDSHKEQ (70 aa). Basic and acidic residues predominate over residues 269–284; the sequence is EQRKLKEQQRKNELNN. The tract at residues 269–293 is disordered; it reads EQRKLKEQQRKNELNNRRKFGNDNN. The segment at 338–362 adopts a C2H2-type 1 zinc-finger fold; that stretch reads YECFICNKTFKSEKQLKNHINTKLH. A Phosphoserine modification is found at serine 393. The tract at residues 441–546 is disordered; that stretch reads EVEDVSSDEN…TLPSSMSPTS (106 aa). The segment covering 455 to 467 has biased composition (basic residues); that stretch reads TKNKKKRKKKKKA. Over residues 480–489 the composition is skewed to basic and acidic residues; that stretch reads DDTKDKRSNE. Threonine 504 bears the Phosphothreonine mark. Basic residues predominate over residues 513–527; it reads KAKKKKGKQPKKNSK. Low complexity predominate over residues 528–546; the sequence is STKSTPSLSTLPSSMSPTS. Residues 549–573 form a C2H2-type 2 zinc finger; it reads EVCTTCGESFDSRNKLFNHVKIAGH.

Its subcellular location is the nucleus. The sequence is that of J protein JJJ1 (JJJ1) from Saccharomyces cerevisiae (strain ATCC 204508 / S288c) (Baker's yeast).